The chain runs to 325 residues: 1-aminocyclopropane-1-carboxylate oxidase 2 (325 aa).

In terms of domain architecture, Fe2OG dioxygenase spans 157–257 (PTFGTKVSNY…RMSIASFYNP (101 aa)). His-181, Asp-183, and His-238 together coordinate Fe cation.

This sequence belongs to the iron/ascorbate-dependent oxidoreductase family. Fe cation is required as a cofactor.

It catalyses the reaction 1-aminocyclopropane-1-carboxylate + L-ascorbate + O2 = ethene + L-dehydroascorbate + hydrogen cyanide + CO2 + 2 H2O. It participates in alkene biosynthesis; ethylene biosynthesis via S-adenosyl-L-methionine; ethylene from S-adenosyl-L-methionine: step 2/2. This Doritaenopsis sp. (Moth orchid) protein is 1-aminocyclopropane-1-carboxylate oxidase 2 (ACO2).